Consider the following 239-residue polypeptide: Adenylate kinase 2 (239 aa).

29-34 (GSGKGT) contributes to the ATP binding site. The NMP stretch occupies residues 49–78 (STGDILRAIIASGSELGQKVQKITESGGLV). AMP is bound by residues Thr-50, Arg-55, 76-78 (GLV), 104-107 (GFPR), and Gln-111. The interval 145 to 182 (GRLFHLASGRSYHELFNPPKVPMVDDITGDRLVHRSDD) is LID. Residues Arg-146 and 155–156 (SY) contribute to the ATP site. Residues Arg-179 and Arg-190 each contribute to the AMP site.

It belongs to the adenylate kinase family. AK2 subfamily. As to quaternary structure, monomer. The cofactor is Mg(2+).

It localises to the cytoplasm. The protein localises to the cytosol. The enzyme catalyses AMP + ATP = 2 ADP. It functions in the pathway purine metabolism; purine nucleotide biosynthesis. In terms of biological role, catalyzes the reversible transfer of the terminal phosphate group between ATP and AMP. Plays an important role in cellular energy homeostasis and in adenine nucleotide metabolism. This is Adenylate kinase 2 from Schistosoma mansoni (Blood fluke).